A 642-amino-acid polypeptide reads, in one-letter code: Arginine--tRNA ligase, chloroplastic/mitochondrial (642 aa).

A chloroplast and mitochondrion-targeting transit peptide spans 1–53; the sequence is MFIFPKDENRRETLTTKLRFSADHLTFTTVTEKLRATAWRFAFSSRAKSVVAM. Residue A54 is modified to N-acetylalanine. The 'HIGH' region signature appears at 190-201; sequence PNIAKEMHVGHL.

Belongs to the class-I aminoacyl-tRNA synthetase family.

Its subcellular location is the plastid. The protein resides in the chloroplast. The protein localises to the mitochondrion. It carries out the reaction tRNA(Arg) + L-arginine + ATP = L-arginyl-tRNA(Arg) + AMP + diphosphate. Its function is as follows. Forms part of a macromolecular complex that catalyzes the attachment of specific amino acids to cognate tRNAs during protein synthesis. The protein is Arginine--tRNA ligase, chloroplastic/mitochondrial of Arabidopsis thaliana (Mouse-ear cress).